A 504-amino-acid chain; its full sequence is Maturase K (504 aa).

It belongs to the intron maturase 2 family. MatK subfamily.

It localises to the plastid. The protein localises to the chloroplast. In terms of biological role, usually encoded in the trnK tRNA gene intron. Probably assists in splicing its own and other chloroplast group II introns. This chain is Maturase K, found in Cardamine amara (Large bitter-cress).